A 484-amino-acid polypeptide reads, in one-letter code: Chromosomal replication initiator protein DnaA (484 aa).

Positions 1–74 (MEKSKNIWSL…ILTKNGYNNV (74 aa)) are domain I, interacts with DnaA modulators. The interval 74 to 139 (VTIVFTNQPP…EEEPTNFKNP (66 aa)) is domain II. Residues 140–356 (FLKKRYTFEN…AAVTKLKAYI (217 aa)) are domain III, AAA+ region. ATP-binding residues include G184, G186, K187, and T188. The segment at 357–484 (DLDNIEIDID…TELMNKIKKN (128 aa)) is domain IV, binds dsDNA.

The protein belongs to the DnaA family. Oligomerizes as a right-handed, spiral filament on DNA at oriC.

The protein localises to the cytoplasm. Its function is as follows. Plays an essential role in the initiation and regulation of chromosomal replication. ATP-DnaA binds to the origin of replication (oriC) to initiate formation of the DNA replication initiation complex once per cell cycle. Binds the DnaA box (a 9 base pair repeat at the origin) and separates the double-stranded (ds)DNA. Forms a right-handed helical filament on oriC DNA; dsDNA binds to the exterior of the filament while single-stranded (ss)DNA is stabiized in the filament's interior. The ATP-DnaA-oriC complex binds and stabilizes one strand of the AT-rich DNA unwinding element (DUE), permitting loading of DNA polymerase. After initiation quickly degrades to an ADP-DnaA complex that is not apt for DNA replication. Binds acidic phospholipids. The sequence is that of Chromosomal replication initiator protein DnaA from Borrelia garinii subsp. bavariensis (strain ATCC BAA-2496 / DSM 23469 / PBi) (Borreliella bavariensis).